A 652-amino-acid polypeptide reads, in one-letter code: Neuroendocrine convertase 2 (652 aa).

The first 22 residues, 1–22, serve as a signal peptide directing secretion; that stretch reads MKNTHVDLICVFLSIFIGIGEA. Residues 23–107 constitute a propeptide that is removed on maturation; it reads VDVYTNHFHV…QLKGYTRTKR (85 aa). One can recognise a Peptidase S8 domain in the interval 136–481; that stretch reads QWYLKNTGQA…FGVLDAAEMV (346 aa). A glycan (N-linked (GlcNAc...) asparagine) is linked at Asn-167. Residues Asp-174 and His-215 each act as charge relay system in the active site. Intrachain disulfides connect Cys-232–Cys-382 and Cys-324–Cys-354. Asn-290 carries N-linked (GlcNAc...) asparagine glycosylation. Residue Ser-390 is the Charge relay system of the active site. Residue Asn-451 is glycosylated (N-linked (GlcNAc...) asparagine). The 137-residue stretch at 489 to 625 folds into the P/Homo B domain; the sequence is TSPPRYHCTA…ELMLHGTREA (137 aa). Cys-496 and Cys-522 are oxidised to a cystine. The segment at 501-652 is required for ubiquitination-mediated degradation; the sequence is IDTPHEIPAD…TVQKAHKRSH (152 aa). N-linked (GlcNAc...) asparagine glycosylation is present at Asn-542.

This sequence belongs to the peptidase S8 family. Furin subfamily. Interacts (via C-terminus) with F-box protein fsn-1 (via SPRY domain); the interaction results in egl-3 proteasomal degradation. Post-translationally, ubiquitinated. As to expression, expressed in head and tail ganglia. Expressed in neurons including mechanosensory and motor neurons, and interneurons (at protein level). Expressed in the nerve ring, ventral nerve cord and intestine.

Its subcellular location is the cell projection. The protein localises to the axon. The protein resides in the cytoplasmic vesicle. It localises to the secretory vesicle lumen. It is found in the secreted. The enzyme catalyses Release of protein hormones and neuropeptides from their precursors, generally by hydrolysis of -Lys-Arg-|- bonds.. Its function is as follows. Serine endoprotease which cleaves preproteins at paired basic amino acids. Processes FMRFamide-like (flp) and neuropeptide-like protein (nlp) neuropeptides. Probably by processing flp-1 and flp-18, modulates the neuronal excitation-inhibition balance and thus the level of activity of the locomotor circuit. Regulates sensitivity to mechanosensory stimuli. By processing neuropeptides, modulates basal acetylcholine release at the ventral cord neuromuscular junctions. Probably by processing flp neuropeptides, regulates the turning step of male mating behavior. Cleaves pro-insulin-like proteins ins-3, ins-4 and ins-6 into their mature active forms. Together with convertase kpc-1, cleaves pro-insulin-like protein ins-18. By controlling ins-4 and ins-6 processing and thus the activation of the daf-2/InsR pathway, negatively modulates synapse development and synaptic transmission at neuromuscular junctions. Similarly, by controlling ins-4 and ins-6 processing, negatively regulates dauer formation under optimal environmental conditions. Under adverse environmental conditions, may promote dauer formation by processing ins-18, a daf-2/InsR antagonist. May cleave dense-core vesicle membrane protein ida-1. Involved in egg-laying, fat storage and locomotion. The polypeptide is Neuroendocrine convertase 2 (Caenorhabditis elegans).